The primary structure comprises 73 residues: Somatostatin-2 (73 aa).

A propeptide spanning residues Ser-1–Glu-45 is cleaved from the precursor. Positions Glu-23 to Arg-58 are disordered. Cys-62 and Cys-73 are joined by a disulfide.

The protein belongs to the somatostatin family.

The protein localises to the secreted. Functionally, somatostatin inhibits the release of somatotropin. The polypeptide is Somatostatin-2 (sst2) (Platichthys flesus (European flounder)).